A 420-amino-acid polypeptide reads, in one-letter code: Phosphoribosylamine--glycine ligase (420 aa).

One can recognise an ATP-grasp domain in the interval 108-314; the sequence is KQFMEKYAIP…FAALIDALLH (207 aa). Residue 134 to 195 coordinates ATP; the sequence is LNERGVPIVI…EDFLAGEEFS (62 aa). Residues glutamate 284 and asparagine 286 each coordinate Mg(2+).

It belongs to the GARS family. Requires Mg(2+) as cofactor. The cofactor is Mn(2+).

The catalysed reaction is 5-phospho-beta-D-ribosylamine + glycine + ATP = N(1)-(5-phospho-beta-D-ribosyl)glycinamide + ADP + phosphate + H(+). It functions in the pathway purine metabolism; IMP biosynthesis via de novo pathway; N(1)-(5-phospho-D-ribosyl)glycinamide from 5-phospho-alpha-D-ribose 1-diphosphate: step 2/2. This Listeria monocytogenes serovar 1/2a (strain ATCC BAA-679 / EGD-e) protein is Phosphoribosylamine--glycine ligase.